A 180-amino-acid chain; its full sequence is Stathmin-3 (180 aa).

Residues C22 and C24 are each lipidated (S-palmitoyl cysteine). Residues 38–180 (GDMEVKQLDK…NKEQREEMSG (143 aa)) enclose the SLD domain. Phosphoserine is present on residues S50, S60, S65, S68, S72, S73, and S81. Positions 59-82 (KSPSDLSPESPMLSSPPKKKDTSL) are disordered. Positions 60–74 (SPSDLSPESPMLSSP) are enriched in low complexity. The stretch at 76–179 (KKKDTSLEEL…RNKEQREEMS (104 aa)) forms a coiled coil.

This sequence belongs to the stathmin family. As to quaternary structure, interacts with STAT3. Interacts with CLU (secreted form); this interaction may act as an important modulator during neuronal differentiation. In terms of processing, N-terminal palmitoylation promotes specific anchoring to the cytosolic leaflet of Golgi membranes and subsequent vesicular trafficking along dendrites and axons. Neuronal Stathmins are substrates for palmitoyltransferases ZDHHC3, ZDHHC7 and ZDHHC15.

Its subcellular location is the golgi apparatus. The protein localises to the cell projection. It localises to the growth cone. The protein resides in the axon. It is found in the cytoplasm. Its subcellular location is the cytosol. Its function is as follows. Exhibits microtubule-destabilizing activity, which is antagonized by STAT3. This is Stathmin-3 (STMN3) from Macaca fascicularis (Crab-eating macaque).